A 277-amino-acid polypeptide reads, in one-letter code: Diaminopimelate epimerase (277 aa).

Residues N15 and N74 each coordinate substrate. C83 (proton donor) is an active-site residue. Residues 84–85 (GN), N159, N194, and 212–213 (ER) each bind substrate. The Proton acceptor role is filled by C221. 222–223 (GT) contacts substrate.

This sequence belongs to the diaminopimelate epimerase family. Homodimer.

It localises to the cytoplasm. The enzyme catalyses (2S,6S)-2,6-diaminopimelate = meso-2,6-diaminopimelate. It functions in the pathway amino-acid biosynthesis; L-lysine biosynthesis via DAP pathway; DL-2,6-diaminopimelate from LL-2,6-diaminopimelate: step 1/1. In terms of biological role, catalyzes the stereoinversion of LL-2,6-diaminopimelate (L,L-DAP) to meso-diaminopimelate (meso-DAP), a precursor of L-lysine and an essential component of the bacterial peptidoglycan. Involved in the succinylase branch of the diaminopimelate biosynthesis. This Corynebacterium glutamicum (strain ATCC 13032 / DSM 20300 / JCM 1318 / BCRC 11384 / CCUG 27702 / LMG 3730 / NBRC 12168 / NCIMB 10025 / NRRL B-2784 / 534) protein is Diaminopimelate epimerase.